The chain runs to 165 residues: UPF0669 protein v1g209471 (165 aa).

Residues 1–23 form the signal peptide; the sequence is MQGRYSAPLFLLLWLFFLHGTLC. N-linked (GlcNAc...) asparagine glycosylation occurs at Asn-38.

It belongs to the UPF0669 family.

It is found in the secreted. The chain is UPF0669 protein v1g209471 from Nematostella vectensis (Starlet sea anemone).